Consider the following 876-residue polypeptide: Alanine--tRNA ligase (876 aa).

Lys-74 bears the N6-acetyllysine mark. Residues His-564, His-568, Cys-666, and His-670 each contribute to the Zn(2+) site.

It belongs to the class-II aminoacyl-tRNA synthetase family. As to quaternary structure, homotetramer. It depends on Zn(2+) as a cofactor.

The protein localises to the cytoplasm. The enzyme catalyses tRNA(Ala) + L-alanine + ATP = L-alanyl-tRNA(Ala) + AMP + diphosphate. In terms of biological role, catalyzes the attachment of alanine to tRNA(Ala) in a two-step reaction: alanine is first activated by ATP to form Ala-AMP and then transferred to the acceptor end of tRNA(Ala). Also edits incorrectly charged Ser-tRNA(Ala) and Gly-tRNA(Ala) via its editing domain. This is Alanine--tRNA ligase from Escherichia coli (strain SMS-3-5 / SECEC).